A 183-amino-acid chain; its full sequence is Probable cobalt-precorrin-6B C(15)-methyltransferase (decarboxylating) (183 aa).

Residues T19, 43–47 (GCGSG), D64, and A92 contribute to the S-adenosyl-L-methionine site.

The protein belongs to the methyltransferase superfamily. Archaeal-type CbiT family.

It carries out the reaction Co-precorrin-6B + S-adenosyl-L-methionine = Co-precorrin-7 + S-adenosyl-L-homocysteine + CO2. It participates in cofactor biosynthesis; adenosylcobalamin biosynthesis; cob(II)yrinate a,c-diamide from sirohydrochlorin (anaerobic route): step 8/10. Catalyzes the methylation of C-15 in cobalt-precorrin-6B followed by the decarboxylation of C-12 to form cobalt-precorrin-7. This is Probable cobalt-precorrin-6B C(15)-methyltransferase (decarboxylating) from Methanocaldococcus jannaschii (strain ATCC 43067 / DSM 2661 / JAL-1 / JCM 10045 / NBRC 100440) (Methanococcus jannaschii).